Reading from the N-terminus, the 352-residue chain is tRNA (guanine-N(1)-)-methyltransferase (352 aa).

S-adenosyl-L-methionine-binding positions include Gly109 and 129–134; that span reads IGDYVL.

The protein belongs to the RNA methyltransferase TrmD family. Homodimer.

It localises to the cytoplasm. The catalysed reaction is guanosine(37) in tRNA + S-adenosyl-L-methionine = N(1)-methylguanosine(37) in tRNA + S-adenosyl-L-homocysteine + H(+). Functionally, specifically methylates guanosine-37 in various tRNAs. In Chlamydia trachomatis serovar A (strain ATCC VR-571B / DSM 19440 / HAR-13), this protein is tRNA (guanine-N(1)-)-methyltransferase.